The sequence spans 377 residues: uncharacterized protein (377 aa).

Residues 1-25 (MAQQTNVAGQKTEKQRKAPFRADHV) are disordered. Basic and acidic residues predominate over residues 11-24 (KTEKQRKAPFRADH).

The protein to B.subtilis YxjG.

This is an uncharacterized protein from Bacillus subtilis (strain 168).